We begin with the raw amino-acid sequence, 148 residues long: uncharacterized protein (148 aa).

This is an uncharacterized protein from Schizosaccharomyces pombe (strain 972 / ATCC 24843) (Fission yeast).